The primary structure comprises 320 residues: Cytochrome f (320 aa).

An N-terminal signal peptide occupies residues 1–35 (MQNRNTFSWIKEQMTRSISVSIMIYVITRTAISNA). Positions 36, 56, 59, and 60 each coordinate heme. Residues 286-306 (VQGLLFFLASVILAQIFLVLK) form a helical membrane-spanning segment.

Belongs to the cytochrome f family. As to quaternary structure, the 4 large subunits of the cytochrome b6-f complex are cytochrome b6, subunit IV (17 kDa polypeptide, petD), cytochrome f and the Rieske protein, while the 4 small subunits are PetG, PetL, PetM and PetN. The complex functions as a dimer. It depends on heme as a cofactor.

It localises to the plastid. The protein resides in the chloroplast thylakoid membrane. Functionally, component of the cytochrome b6-f complex, which mediates electron transfer between photosystem II (PSII) and photosystem I (PSI), cyclic electron flow around PSI, and state transitions. This chain is Cytochrome f, found in Platanus occidentalis (Sycamore).